The following is a 381-amino-acid chain: Beta-lactamase (381 aa).

The first 20 residues, 1–20 (MMKKSICCALLLTASFSTFA), serve as a signal peptide directing secretion. The Acyl-ester intermediate role is filled by Ser-84. Tyr-170 functions as the Proton acceptor in the catalytic mechanism. 335-337 (KTG) lines the substrate pocket.

It belongs to the class-C beta-lactamase family.

The protein resides in the periplasm. The enzyme catalyses a beta-lactam + H2O = a substituted beta-amino acid. Its activity is regulated as follows. Sulbactam is an effective progressive inhibitor but a poor competitive inhibitor. In terms of biological role, this protein is a serine beta-lactamase with a substrate specificity for cephalosporins. The sequence is that of Beta-lactamase (ampC) from Citrobacter freundii.